The chain runs to 217 residues: Adenylate kinase (217 aa).

ATP is bound at residue 10–15 (GAGKGT). The interval 30 to 59 (STGDMFRAAMKEETPLGLEAKSYIDKGELV) is NMP. Residues T31, R36, 57–59 (ELV), 85–88 (GFPR), and Q92 contribute to the AMP site. Positions 126–163 (GRRICSVCGTTYHLVFNPPKTPGVCDKDGGDLYQRADD) are LID. Residue R127 participates in ATP binding. Zn(2+) contacts are provided by C130 and C133. Residue 136-137 (TY) participates in ATP binding. Zn(2+) is bound by residues C150 and D153. R160 and R171 together coordinate AMP. Q199 is a binding site for ATP.

Belongs to the adenylate kinase family. In terms of assembly, monomer.

It is found in the cytoplasm. The catalysed reaction is AMP + ATP = 2 ADP. It functions in the pathway purine metabolism; AMP biosynthesis via salvage pathway; AMP from ADP: step 1/1. In terms of biological role, catalyzes the reversible transfer of the terminal phosphate group between ATP and AMP. Plays an important role in cellular energy homeostasis and in adenine nucleotide metabolism. This Bacillus velezensis (strain DSM 23117 / BGSC 10A6 / LMG 26770 / FZB42) (Bacillus amyloliquefaciens subsp. plantarum) protein is Adenylate kinase.